Here is a 134-residue protein sequence, read N- to C-terminus: CDGSH iron-sulfur domain-containing protein 2 homolog (134 aa).

Residues 1–35 (MESLSHLVKSTLPNYLSNLPVPDTLGGWFKLSFKD) are Lumenal-facing. The helical transmembrane segment at 36–58 (WLALIPPTVVVAGIGYTGYLAFC) threads the bilayer. The Cytoplasmic portion of the chain corresponds to 59-134 (PAAQDRCSAK…DNVGPVVVKK (76 aa)). 4 residues coordinate [2Fe-2S] cluster: Cys-101, Cys-103, Cys-112, and His-116.

This sequence belongs to the CISD protein family. CISD2 subfamily. Requires [2Fe-2S] cluster as cofactor.

Its subcellular location is the endoplasmic reticulum membrane. This is CDGSH iron-sulfur domain-containing protein 2 homolog from Drosophila willistoni (Fruit fly).